Here is a 355-residue protein sequence, read N- to C-terminus: Histidinol-phosphate aminotransferase 2 (355 aa).

K213 carries the N6-(pyridoxal phosphate)lysine modification.

Belongs to the class-II pyridoxal-phosphate-dependent aminotransferase family. Histidinol-phosphate aminotransferase subfamily. As to quaternary structure, homodimer. Pyridoxal 5'-phosphate is required as a cofactor.

The enzyme catalyses L-histidinol phosphate + 2-oxoglutarate = 3-(imidazol-4-yl)-2-oxopropyl phosphate + L-glutamate. The protein operates within amino-acid biosynthesis; L-histidine biosynthesis; L-histidine from 5-phospho-alpha-D-ribose 1-diphosphate: step 7/9. The polypeptide is Histidinol-phosphate aminotransferase 2 (Burkholderia lata (strain ATCC 17760 / DSM 23089 / LMG 22485 / NCIMB 9086 / R18194 / 383)).